We begin with the raw amino-acid sequence, 433 residues long: Glucose-1-phosphate adenylyltransferase (433 aa).

Alpha-D-glucose 1-phosphate contacts are provided by residues Y117, G182, 197–198 (EK), and S215.

It belongs to the bacterial/plant glucose-1-phosphate adenylyltransferase family. Homotetramer.

It carries out the reaction alpha-D-glucose 1-phosphate + ATP + H(+) = ADP-alpha-D-glucose + diphosphate. Its pathway is glycan biosynthesis; glycogen biosynthesis. Involved in the biosynthesis of ADP-glucose, a building block required for the elongation reactions to produce glycogen. Catalyzes the reaction between ATP and alpha-D-glucose 1-phosphate (G1P) to produce pyrophosphate and ADP-Glc. This chain is Glucose-1-phosphate adenylyltransferase, found in Nitrosomonas europaea (strain ATCC 19718 / CIP 103999 / KCTC 2705 / NBRC 14298).